The chain runs to 264 residues: Small ribosomal subunit protein uS2 (264 aa).

Positions His-228–Ser-264 are disordered. Polar residues predominate over residues Glu-251–Ser-264.

This sequence belongs to the universal ribosomal protein uS2 family.

This is Small ribosomal subunit protein uS2 from Deinococcus radiodurans (strain ATCC 13939 / DSM 20539 / JCM 16871 / CCUG 27074 / LMG 4051 / NBRC 15346 / NCIMB 9279 / VKM B-1422 / R1).